We begin with the raw amino-acid sequence, 871 residues long: Chaperone protein ClpB 1 (871 aa).

Residues 6-147 form the Clp R domain; sequence PNQFTEKAWA…REAIQQIRGS (142 aa). Repeat regions lie at residues 9–73 and 84–147; these read FTEK…ISRQ and LGQS…IRGS. An NBD1 region spans residues 160–341; the sequence is AALEKYGRDL…RRFQQVYVDQ (182 aa). Residue 207–214 coordinates ATP; sequence GEPGVGKT. The linker stretch occupies residues 342–550; that stretch reads PSVEDTISIL…IAEIISKWTG (209 aa). The stretch at 392–526 forms a coiled coil; it reads IDLVDEAAAK…AEAKLREIQV (135 aa). The interval 560–771 is NBD2; the sequence is EAQKLLHLEE…RVDEFIIFHS (212 aa). 610 to 617 lines the ATP pocket; sequence GPTGVGKT. Residues 772 to 871 form a C-terminal region; the sequence is LRKDQLRQIV…FRRQVELATV (100 aa).

Belongs to the ClpA/ClpB family. As to quaternary structure, homohexamer. The oligomerization is ATP-dependent.

It is found in the cytoplasm. Functionally, part of a stress-induced multi-chaperone system, it is involved in the recovery of the cell from heat-induced damage, in cooperation with DnaK, DnaJ and GrpE. Acts before DnaK, in the processing of protein aggregates. Protein binding stimulates the ATPase activity; ATP hydrolysis unfolds the denatured protein aggregates, which probably helps expose new hydrophobic binding sites on the surface of ClpB-bound aggregates, contributing to the solubilization and refolding of denatured protein aggregates by DnaK. This is Chaperone protein ClpB 1 (clpB1) from Thermosynechococcus vestitus (strain NIES-2133 / IAM M-273 / BP-1).